Reading from the N-terminus, the 295-residue chain is MYKDIATPTRTKEILEKYGFSFKKSLGQNFLIEPNILHRIVDFAQLSERTGVIEIGPGIGALTEQLARRAKKVVAFEIDQRLLPILADTLSPYTNVSIIHEDILKADVQQVIAEQFTDVDDIMVVANLPYYVTTPIIMKLLTDRLPIRGMVVMLQKEVADRMAAKPGTKDYGSLTIAVQYYTHAETVMHVPRTVFVPKPNVDSAVIRLLKREQPAVSVSNEDFFFAVVRASFGQRRKTILNNLLNQLPNGKEKKEQIENALANAGIDPKRRGETLAIAEFATLSEQLYPIFYEEA.

S-adenosyl-L-methionine-binding residues include Asn-29, Leu-31, Gly-56, Glu-77, Asp-102, and Asn-127.

It belongs to the class I-like SAM-binding methyltransferase superfamily. rRNA adenine N(6)-methyltransferase family. RsmA subfamily.

The protein resides in the cytoplasm. It catalyses the reaction adenosine(1518)/adenosine(1519) in 16S rRNA + 4 S-adenosyl-L-methionine = N(6)-dimethyladenosine(1518)/N(6)-dimethyladenosine(1519) in 16S rRNA + 4 S-adenosyl-L-homocysteine + 4 H(+). Specifically dimethylates two adjacent adenosines (A1518 and A1519) in the loop of a conserved hairpin near the 3'-end of 16S rRNA in the 30S particle. May play a critical role in biogenesis of 30S subunits. In Anoxybacillus flavithermus (strain DSM 21510 / WK1), this protein is Ribosomal RNA small subunit methyltransferase A.